We begin with the raw amino-acid sequence, 406 residues long: MKRAFILVLDSFGIGATADAQAFGDVGSDTLGHIADQCAQGLADNAERKGALQLPNLSKLGLAMAHKESTGRFAPGLDERADIIGAYAHAAELSSGKDTPSGHWEIAGVPVLFEWGYFSDKQNSFPKELTDRILARAGLDGFLGNCHASGTQVLDDLGEEHMRTGKPIFYTSADSVFQIACHEETFGLDRLLELCQIAREELADYNIGRVIARPFVGPGKGQFARTGNRRDLSVEPPSATVLQKLVEEKQGRVVSIGKIADIYAYCGITDKVKATGIPDLFEATLEQIKQAGDNTIVFTNFVDFDSAYGHRRDVAGYAAALEYFDKRLPEVLELMQEDDILILTADHGCDPTWPGTDHTREHIPVLVYGKKVAPGSLGRRDTFADIGQTLASYFGTSPMDYGKNFL.

The Mn(2+) site is built by aspartate 10, aspartate 305, histidine 310, aspartate 346, histidine 347, and histidine 358.

This sequence belongs to the phosphopentomutase family. Mn(2+) serves as cofactor.

The protein resides in the cytoplasm. The enzyme catalyses 2-deoxy-alpha-D-ribose 1-phosphate = 2-deoxy-D-ribose 5-phosphate. It catalyses the reaction alpha-D-ribose 1-phosphate = D-ribose 5-phosphate. It participates in carbohydrate degradation; 2-deoxy-D-ribose 1-phosphate degradation; D-glyceraldehyde 3-phosphate and acetaldehyde from 2-deoxy-alpha-D-ribose 1-phosphate: step 1/2. Isomerase that catalyzes the conversion of deoxy-ribose 1-phosphate (dRib-1-P) and ribose 1-phosphate (Rib-1-P) to deoxy-ribose 5-phosphate (dRib-5-P) and ribose 5-phosphate (Rib-5-P), respectively. The chain is Phosphopentomutase from Vibrio cholerae serotype O1 (strain ATCC 39315 / El Tor Inaba N16961).